A 319-amino-acid polypeptide reads, in one-letter code: Ribosomal protein L11 methyltransferase (319 aa).

Positions 165, 186, 208, and 251 each coordinate S-adenosyl-L-methionine.

Belongs to the methyltransferase superfamily. PrmA family.

The protein resides in the cytoplasm. The enzyme catalyses L-lysyl-[protein] + 3 S-adenosyl-L-methionine = N(6),N(6),N(6)-trimethyl-L-lysyl-[protein] + 3 S-adenosyl-L-homocysteine + 3 H(+). In terms of biological role, methylates ribosomal protein L11. This is Ribosomal protein L11 methyltransferase from Limosilactobacillus reuteri subsp. reuteri (strain JCM 1112) (Lactobacillus reuteri).